Reading from the N-terminus, the 317-residue chain is Melanocyte-stimulating hormone receptor (317 aa).

Residues 1–37 (MPVQGSQRRLLGSLNSTPTATPHLGLAANQTGARCLE) lie on the Extracellular side of the membrane. Asn-29 carries N-linked (GlcNAc...) asparagine glycosylation. A helical transmembrane segment spans residues 38–63 (VSVPDGLFLSLGLVSLVENVLVVTAI). Residues 64–72 (AKNRNLHSP) are Cytoplasmic-facing. The chain crosses the membrane as a helical span at residues 73–93 (MYCFICCLALSDLLVSGSNML). Topologically, residues 94–118 (ETAVTLLLEAGALAARAAVVQQLDN) are extracellular. A helical transmembrane segment spans residues 119 to 140 (VIDVITCSSMLSSLCFLGAIAV). Over 141 to 163 (DRYISIFYALRYHSIVTLPRARR) the chain is Cytoplasmic. A helical transmembrane segment spans residues 164 to 183 (AVAAIWVASVLCSTLFIAYY). Residues 184-191 (DHAAVLLC) lie on the Extracellular side of the membrane. A helical transmembrane segment spans residues 192 to 211 (LVVFFLAMLVLMAVLYVHML). The Cytoplasmic portion of the chain corresponds to 212–240 (ARACQHAQGIARLHKRQRLAHQGFGLKGA). The chain crosses the membrane as a helical span at residues 241–266 (ATLTILLGIFFLCWGPFFLHLTLIVL). The Extracellular segment spans residues 267 to 279 (CPQHPTCSCIFKN). Residues 280–300 (FNLFLALIICNAIIDPLIYAF) traverse the membrane as a helical segment. The Cytoplasmic portion of the chain corresponds to 301 to 317 (RSQELRRTLKEVLLCSW). The S-palmitoyl cysteine moiety is linked to residue Cys-315.

The protein belongs to the G-protein coupled receptor 1 family. In terms of assembly, interacts with MGRN1, but does not undergo MGRN1-mediated ubiquitination; this interaction competes with GNAS-binding and thus inhibits agonist-induced cAMP production. Interacts with OPN3; the interaction results in a decrease in MC1R-mediated cAMP signaling and ultimately a decrease in melanin production in melanocytes.

It is found in the cell membrane. Functionally, receptor for MSH (alpha, beta and gamma) and ACTH. The activity of this receptor is mediated by G proteins which activate adenylate cyclase. Mediates melanogenesis, the production of eumelanin (black/brown) and phaeomelanin (red/yellow), via regulation of cAMP signaling in melanocytes. The polypeptide is Melanocyte-stimulating hormone receptor (MC1R) (Macaca sylvanus (Barbary macaque)).